A 296-amino-acid chain; its full sequence is 4-hydroxybenzoate octaprenyltransferase (296 aa).

8 consecutive transmembrane segments (helical) span residues 28-48 (PIGI…AGNG), 52-72 (LANV…GCCI), 102-122 (ALAL…CTNS), 145-167 (TYYP…FTAA), 174-196 (SAWL…YAMV), 219-239 (NIIL…GSRF), 241-261 (LGGW…WEYW), and 275-295 (FLHN…DYAF).

This sequence belongs to the UbiA prenyltransferase family. It depends on Mg(2+) as a cofactor.

The protein localises to the cell inner membrane. It catalyses the reaction all-trans-octaprenyl diphosphate + 4-hydroxybenzoate = 4-hydroxy-3-(all-trans-octaprenyl)benzoate + diphosphate. Its pathway is cofactor biosynthesis; ubiquinone biosynthesis. Functionally, catalyzes the prenylation of para-hydroxybenzoate (PHB) with an all-trans polyprenyl group. Mediates the second step in the final reaction sequence of ubiquinone-8 (UQ-8) biosynthesis, which is the condensation of the polyisoprenoid side chain with PHB, generating the first membrane-bound Q intermediate 3-octaprenyl-4-hydroxybenzoate. This Pseudomonas putida (strain GB-1) protein is 4-hydroxybenzoate octaprenyltransferase.